The primary structure comprises 618 residues: DNA mismatch repair protein MutL (618 aa).

A compositionally biased stretch (low complexity) spans 367–381; it reads EPTAAREPATPRYSG. The tract at residues 367 to 402 is disordered; it reads EPTAAREPATPRYSGGASGGNGGRQSAGGWPHAQPG. Residues 382 to 392 are compositionally biased toward gly residues; the sequence is GASGGNGGRQS.

This sequence belongs to the DNA mismatch repair MutL/HexB family.

This protein is involved in the repair of mismatches in DNA. It is required for dam-dependent methyl-directed DNA mismatch repair. May act as a 'molecular matchmaker', a protein that promotes the formation of a stable complex between two or more DNA-binding proteins in an ATP-dependent manner without itself being part of a final effector complex. The protein is DNA mismatch repair protein MutL of Salmonella gallinarum (strain 287/91 / NCTC 13346).